Here is a 526-residue protein sequence, read N- to C-terminus: Exodeoxyribonuclease 7 large subunit (526 aa).

The segment at 497–526 (AMTTEGGTPPAGAKKRSTKPAEPPKQGSLF) is disordered.

The protein belongs to the XseA family. As to quaternary structure, heterooligomer composed of large and small subunits.

It localises to the cytoplasm. It carries out the reaction Exonucleolytic cleavage in either 5'- to 3'- or 3'- to 5'-direction to yield nucleoside 5'-phosphates.. Its function is as follows. Bidirectionally degrades single-stranded DNA into large acid-insoluble oligonucleotides, which are then degraded further into small acid-soluble oligonucleotides. The polypeptide is Exodeoxyribonuclease 7 large subunit (Rhizobium johnstonii (strain DSM 114642 / LMG 32736 / 3841) (Rhizobium leguminosarum bv. viciae)).